A 1717-amino-acid polypeptide reads, in one-letter code: DNA-directed RNA polymerase I subunit RPA1 (1717 aa).

Zn(2+)-binding residues include Cys64, Cys67, Cys74, His77, Cys104, and Cys107. Residues 110–201 form a clamp region; that stretch reads LTCPRAAIYL…VAQFWKTHMA (92 aa). Positions 205 and 208 each coordinate Zn(2+). Residues 327–433 are clamp; it reads FTNGQTVNLQ…IRQILEKKEG (107 aa). The segment at 410–423 is rudder; the sequence is DSEMDKLMLEKYPG. Residues Lys431, Arg436, and Arg443 each coordinate DNA. The interval 475-549 is involved in RRN3 binding to Pol I complex; it reads YPQPVTPWNV…QGTKVVCRHV (75 aa). Arg559 is an RNA binding site. 3 residues coordinate Mg(2+): Asp595, Asp597, and Asp599. Asp599 is an RNA binding site. Residues 812 to 890 form a funnel region; sequence KPNADVVRQR…NEINKACMPL (79 aa). Residues 967 to 1008 are bridging helix; sequence RPPEFFFHCMAGREGLVDTAVKTSRSGYLQRCIIKHLEGLVI. Residues 1067–1162 are mediates the interaction with TOP2A; that stretch reads ADPQKVLGHI…SLSVWRPDIY (96 aa). Residues 1214–1255 form a trigger loop region; sequence PGEAVGLLAAQSIGEPSTQMTLNTFHFAGRGEMNVTLGIPRL. Arg1256 contributes to the DNA binding site. A disordered region spans residues 1372–1493; the sequence is RNVNSRRATQ…RRHSRPQGAE (122 aa). Over residues 1380–1397 the composition is skewed to basic and acidic residues; it reads TQKDLNDTEDSGRSQREE. Ser1393 carries the post-translational modification Phosphoserine. Acidic residues-rich tracts occupy residues 1398 to 1419 and 1429 to 1450; these read ERDE…DADA and EEEV…EVQE. Residues 1452–1464 are compositionally biased toward basic and acidic residues; it reads GNIKGDGVHQGHE. Residues 1465 to 1477 are compositionally biased toward acidic residues; sequence PDEEEHLGLEEEE.

Belongs to the RNA polymerase beta' chain family. Component of the RNA polymerase I (Pol I) complex consisting of 13 subunits: a ten-subunit catalytic core composed of POLR1A/RPA1, POLR1B/RPA2, POLR1C/RPAC1, POLR1D/RPAC2, POLR1H/RPA12, POLR2E/RPABC1, POLR2F/RPABC2, POLR2H/RPABC3, POLR2K/RPABC4 and POLR2L/RPABC5; a mobile stalk subunit POLR1F/RPA43 protruding from the core and additional subunits homologous to general transcription factors POLR1E/RPA49 and POLR1G/RPA34. Part of Pol I pre-initiation complex (PIC), in which Pol I core assembles with RRN3 and promoter-bound UTBF and SL1/TIF-IB complex. Interacts (via dock II domain) with TOP2A; this interaction may assist Pol I transcription initiation by releasing supercoils occurring during DNA unwinding. Interacts with CAVIN1; this interaction induces the dissociation of Pol I complex paused at rDNA terminator sequences. Interacts with MYO1C. Interacts with ERBB2. Interacts with DDX11. Interacts with RECQL5. Mg(2+) serves as cofactor. In terms of processing, phosphorylated.

The protein localises to the nucleus. Its subcellular location is the nucleolus. It localises to the chromosome. It catalyses the reaction RNA(n) + a ribonucleoside 5'-triphosphate = RNA(n+1) + diphosphate. Functionally, catalytic core component of RNA polymerase I (Pol I), a DNA-dependent RNA polymerase which synthesizes ribosomal RNA precursors using the four ribonucleoside triphosphates as substrates. Transcribes 47S pre-rRNAs from multicopy rRNA gene clusters, giving rise to 5.8S, 18S and 28S ribosomal RNAs. Pol I-mediated transcription cycle proceeds through transcription initiation, transcription elongation and transcription termination stages. During transcription initiation, Pol I pre-initiation complex (PIC) is recruited by the selectivity factor 1 (SL1/TIF-IB) complex bound to the core promoter that precedes an rDNA repeat unit. The PIC assembly bends the promoter favoring the formation of the transcription bubble and promoter escape. Once the polymerase has escaped from the promoter it enters the elongation phase during which RNA is actively polymerized, based on complementarity with the template DNA strand. Highly processive, assembles in structures referred to as 'Miller trees' where many elongating Pol I complexes queue and transcribe the same rDNA coding regions. At terminator sequences downstream of the rDNA gene, PTRF interacts with Pol I and halts Pol I transcription leading to the release of the RNA transcript and polymerase from the DNA. Forms Pol I active center together with the second largest subunit POLR1B/RPA2. Appends one nucleotide at a time to the 3' end of the nascent RNA, with POLR1A/RPA1 contributing a Mg(2+)-coordinating DxDGD motif, and POLR1B/RPA2 participating in the coordination of a second Mg(2+) ion and providing lysine residues believed to facilitate Watson-Crick base pairing between the incoming nucleotide and the template base. Typically, Mg(2+) ions direct a 5' nucleoside triphosphate to form a phosphodiester bond with the 3' hydroxyl of the preceding nucleotide of the nascent RNA, with the elimination of pyrophosphate. Has proofreading activity: Pauses and backtracks to allow the cleavage of a missincorporated nucleotide via POLR1H/RPA12. High Pol I processivity is associated with decreased transcription fidelity. In Mus musculus (Mouse), this protein is DNA-directed RNA polymerase I subunit RPA1.